The chain runs to 93 residues: uncharacterized protein (93 aa).

3 helical membrane passes run 15-35 (MAGL…VMLV), 48-68 (ILAI…IYQI), and 72-92 (LSYA…AGVH).

Its subcellular location is the cell membrane. This is an uncharacterized protein from Bacillus subtilis (strain 168).